Reading from the N-terminus, the 344-residue chain is Geranylgeranyl pyrophosphate synthase 10, mitochondrial (344 aa).

Residues 1-40 (MENREVFVYIVISIFRSLQFLFWRFRPRYNDVTSALTRPL) constitute a mitochondrion transit peptide. Isopentenyl diphosphate-binding residues include Lys91, Arg94, and His123. Residues Asp130 and Asp136 each contribute to the Mg(2+) site. Residue Arg141 participates in dimethylallyl diphosphate binding. Arg142 is an isopentenyl diphosphate binding site. Residues Lys229, Thr230, Gln267, Lys284, and Lys294 each coordinate dimethylallyl diphosphate.

It belongs to the FPP/GGPP synthase family. As to quaternary structure, monomer. Mg(2+) serves as cofactor.

Its subcellular location is the mitochondrion. It carries out the reaction isopentenyl diphosphate + dimethylallyl diphosphate = (2E)-geranyl diphosphate + diphosphate. The catalysed reaction is isopentenyl diphosphate + (2E)-geranyl diphosphate = (2E,6E)-farnesyl diphosphate + diphosphate. It catalyses the reaction isopentenyl diphosphate + (2E,6E)-farnesyl diphosphate = (2E,6E,10E)-geranylgeranyl diphosphate + diphosphate. It participates in isoprenoid biosynthesis; farnesyl diphosphate biosynthesis; farnesyl diphosphate from geranyl diphosphate and isopentenyl diphosphate: step 1/1. Its pathway is isoprenoid biosynthesis; geranyl diphosphate biosynthesis; geranyl diphosphate from dimethylallyl diphosphate and isopentenyl diphosphate: step 1/1. The protein operates within isoprenoid biosynthesis; geranylgeranyl diphosphate biosynthesis; geranylgeranyl diphosphate from farnesyl diphosphate and isopentenyl diphosphate: step 1/1. Its function is as follows. Catalyzes the trans-addition of the three molecules of IPP onto DMAPP to form geranylgeranyl pyrophosphate. In Arabidopsis thaliana (Mouse-ear cress), this protein is Geranylgeranyl pyrophosphate synthase 10, mitochondrial.